A 989-amino-acid chain; its full sequence is Cellulose synthase A catalytic subunit 4 [UDP-forming] (989 aa).

Residues 1-184 (MMESGVPPCA…SRIIPISKNK (184 aa)) lie on the Cytoplasmic side of the membrane. Zn(2+)-binding residues include C9, C12, C20, C23, C28, C31, C43, and C46. The segment at 9–47 (CAACGDDAHAACRACSYALCKACLDEDAAEGRTTCARCG) adopts an RING-type; degenerate zinc-finger fold. Basic residues predominate over residues 138–149 (KKEKKASAKKAA). A disordered region spans residues 138 to 158 (KKEKKASAKKAAAKAQAPPVE). The helical transmembrane segment at 185 to 205 (LTPYRAVIIMRLVVLGLFFHY) threads the bilayer. Residues 206–213 (RITNPVYS) are Extracellular-facing. The chain crosses the membrane as a helical span at residues 214-234 (AFGLWMTSVICEIWFGFSWIL). Residues 235–772 (DQFPKWCPIN…INTIVYPFTS (538 aa)) are Cytoplasmic-facing. The UDP-alpha-D-glucose site is built by S272, K278, E279, and D308. The active site involves D308. Positions 362-389 (VKERRAMKRDYEEYKVRINALVAKAQKT) form a coiled coil. K449 lines the UDP-alpha-D-glucose pocket. Positions 450 and 474 each coordinate Mn(2+). D688 is a catalytic residue. Residues 773–793 (LPLIAYCCLPAICLLTGKFII) traverse the membrane as a helical segment. Residues 794–798 (PTLSN) are Extracellular-facing. The helical transmembrane segment at 799–819 (AATIWFLGLFISIIVTSVLEL) threads the bilayer. The Cytoplasmic portion of the chain corresponds to 820 to 835 (RWSGIGIEDWWRNEQF). Residues 836-856 (WVIGGVSAHLFAVFQGILKMI) traverse the membrane as a helical segment. Residues 857–884 (AGLDTNFTVTAKATDDTEFGELYVFKWT) are Extracellular-facing. The N-linked (GlcNAc...) asparagine glycan is linked to N862. A helical membrane pass occupies residues 885–905 (TVLIPPTSILVLNLVGVVAGF). The Cytoplasmic segment spans residues 906 to 916 (SDALNSGYESW). Residues 917–937 (GPLFGKVFFAMWVIMHLYPFL) traverse the membrane as a helical segment. Over 938–946 (KGLMGRQNR) the chain is Extracellular. A helical transmembrane segment spans residues 947 to 967 (TPTIVVLWSVLLASVFSLLWV). The Cytoplasmic portion of the chain corresponds to 968 to 989 (KIDPFIGSSETTTTNSCANFDC).

The protein belongs to the glycosyltransferase 2 family. Plant cellulose synthase subfamily. It depends on Mn(2+) as a cofactor. Zn(2+) serves as cofactor.

The protein localises to the cell membrane. The catalysed reaction is [(1-&gt;4)-beta-D-glucosyl](n) + UDP-alpha-D-glucose = [(1-&gt;4)-beta-D-glucosyl](n+1) + UDP + H(+). It participates in glycan metabolism; plant cellulose biosynthesis. Functionally, catalytic subunit of cellulose synthase terminal complexes ('rosettes'), required for beta-1,4-glucan microfibril crystallization, a major mechanism of the cell wall formation. Involved in the secondary cell wall formation. This chain is Cellulose synthase A catalytic subunit 4 [UDP-forming] (CESA4), found in Oryza sativa subsp. japonica (Rice).